Reading from the N-terminus, the 137-residue chain is Large ribosomal subunit protein uL16 (137 aa).

This sequence belongs to the universal ribosomal protein uL16 family. In terms of assembly, part of the 50S ribosomal subunit.

Its function is as follows. Binds 23S rRNA and is also seen to make contacts with the A and possibly P site tRNAs. The chain is Large ribosomal subunit protein uL16 from Wolbachia sp. subsp. Brugia malayi (strain TRS).